Consider the following 505-residue polypeptide: Salutaridine synthase (505 aa).

The helical transmembrane segment at 10–30 threads the bilayer; it reads DFWMIACTVIIVFALVKFMFS. C444 lines the heme pocket.

Belongs to the cytochrome P450 family. Heme is required as a cofactor.

Its subcellular location is the endoplasmic reticulum membrane. The enzyme catalyses (R)-reticuline + reduced [NADPH--hemoprotein reductase] + O2 = salutaridine + oxidized [NADPH--hemoprotein reductase] + 2 H2O + H(+). Cytochrome P450 monooxygenase involved in biosynthesis of morphinan-type benzylisoquinoline and opiate alkaloids natural products. Catalyzes the formation of the morphinan alkaloid salutaridine by intramolecular phenol oxidation of (R)-reticuline without the incorporation of oxygen into the product. Can also use (R)-norreticuline as substrate. This Papaver somniferum (Opium poppy) protein is Salutaridine synthase.